The chain runs to 79 residues: Protein S100-G (79 aa).

Ser2 is modified (N-acetylserine). EF-hand domains are found at residues 13 to 48 and 45 to 79; these read IFEK…KGSS and KGSS…KISQ. The Ca(2+) site is built by Gln26 and Glu31. The residue at position 47 (Ser47) is a Phosphoserine. Positions 58, 60, 62, 64, and 69 each coordinate Ca(2+).

It belongs to the S-100 family.

This Equus caballus (Horse) protein is Protein S100-G (S100G).